The chain runs to 239 residues: Small ribosomal subunit protein uS3 (239 aa).

Residues 39-109 (IRAMIQEIPE…KVQIKIKEVK (71 aa)) form the KH type-2 domain. Positions 219–239 (GALLKKQRRPRTEKPAQAGRQ) are disordered.

This sequence belongs to the universal ribosomal protein uS3 family. As to quaternary structure, part of the 30S ribosomal subunit. Forms a tight complex with proteins S10 and S14.

Its function is as follows. Binds the lower part of the 30S subunit head. Binds mRNA in the 70S ribosome, positioning it for translation. This chain is Small ribosomal subunit protein uS3, found in Treponema denticola (strain ATCC 35405 / DSM 14222 / CIP 103919 / JCM 8153 / KCTC 15104).